The chain runs to 609 residues: UvrABC system protein C (609 aa).

The 79-residue stretch at 22 to 100 (EKPGVYQYLN…IKKYKPRYNV (79 aa)) folds into the GIY-YIG domain. Residues 214–249 (QDISRMLVEKMQELANEMKFEEAQKIKEKYLLIENY) enclose the UVR domain.

This sequence belongs to the UvrC family. As to quaternary structure, interacts with UvrB in an incision complex.

It is found in the cytoplasm. The UvrABC repair system catalyzes the recognition and processing of DNA lesions. UvrC both incises the 5' and 3' sides of the lesion. The N-terminal half is responsible for the 3' incision and the C-terminal half is responsible for the 5' incision. This is UvrABC system protein C from Bacteroides thetaiotaomicron (strain ATCC 29148 / DSM 2079 / JCM 5827 / CCUG 10774 / NCTC 10582 / VPI-5482 / E50).